The following is a 202-amino-acid chain: Probable molybdenum cofactor guanylyltransferase (202 aa).

GTP-binding positions include 9 to 11 (VAG), Lys-22, Asn-50, Asp-77, and Asp-102. Residue Asp-102 participates in Mg(2+) binding.

It belongs to the MobA family. Mg(2+) is required as a cofactor.

The protein localises to the cytoplasm. It carries out the reaction Mo-molybdopterin + GTP + H(+) = Mo-molybdopterin guanine dinucleotide + diphosphate. Its function is as follows. Transfers a GMP moiety from GTP to Mo-molybdopterin (Mo-MPT) cofactor (Moco or molybdenum cofactor) to form Mo-molybdopterin guanine dinucleotide (Mo-MGD) cofactor. In Natronomonas pharaonis (strain ATCC 35678 / DSM 2160 / CIP 103997 / JCM 8858 / NBRC 14720 / NCIMB 2260 / Gabara) (Halobacterium pharaonis), this protein is Probable molybdenum cofactor guanylyltransferase.